Consider the following 640-residue polypeptide: 1-deoxy-D-xylulose-5-phosphate synthase (640 aa).

Thiamine diphosphate contacts are provided by residues H78 and 119-121; that span reads GHS. Mg(2+) is bound at residue D151. Residues 152 to 153, N180, Y289, and E371 contribute to the thiamine diphosphate site; that span reads GA. A Mg(2+)-binding site is contributed by N180.

It belongs to the transketolase family. DXPS subfamily. In terms of assembly, homodimer. Mg(2+) is required as a cofactor. Requires thiamine diphosphate as cofactor.

The catalysed reaction is D-glyceraldehyde 3-phosphate + pyruvate + H(+) = 1-deoxy-D-xylulose 5-phosphate + CO2. It participates in metabolic intermediate biosynthesis; 1-deoxy-D-xylulose 5-phosphate biosynthesis; 1-deoxy-D-xylulose 5-phosphate from D-glyceraldehyde 3-phosphate and pyruvate: step 1/1. Its function is as follows. Catalyzes the acyloin condensation reaction between C atoms 2 and 3 of pyruvate and glyceraldehyde 3-phosphate to yield 1-deoxy-D-xylulose-5-phosphate (DXP). The sequence is that of 1-deoxy-D-xylulose-5-phosphate synthase from Bartonella quintana (strain Toulouse) (Rochalimaea quintana).